Here is a 313-residue protein sequence, read N- to C-terminus: Homoserine O-acetyltransferase (313 aa).

Cysteine 144 serves as the catalytic Acyl-thioester intermediate. 2 residues coordinate substrate: lysine 165 and serine 194. Catalysis depends on histidine 236, which acts as the Proton acceptor. Residue glutamate 238 is part of the active site. Substrate is bound at residue arginine 250.

Belongs to the MetA family.

The protein resides in the cytoplasm. It catalyses the reaction L-homoserine + acetyl-CoA = O-acetyl-L-homoserine + CoA. It participates in amino-acid biosynthesis; L-methionine biosynthesis via de novo pathway; O-acetyl-L-homoserine from L-homoserine: step 1/1. In terms of biological role, transfers an acetyl group from acetyl-CoA to L-homoserine, forming acetyl-L-homoserine. The sequence is that of Homoserine O-acetyltransferase from Jannaschia sp. (strain CCS1).